The primary structure comprises 256 residues: Neuroendocrine secretory protein 55 (256 aa).

Residues 1-46 (MDRRSRAHQWRRARHNYNDLCPPIGRRAATALLWLSCSIALLRALA) form the signal peptide. Positions 61 to 256 (SFLNAHHRSA…RKGPIPIRRH (196 aa)) are disordered. Over residues 86–103 (ESDHEHEEAEPELARPEC) the composition is skewed to basic and acidic residues. Acidic residues-rich tracts occupy residues 104–139 (LEYD…ETEP) and 206–216 (LDEDPRDPEES). Basic residues predominate over residues 225-236 (QPRRCKTRRPAR).

Belongs to the NESP55 family. Post-translationally, binds keratan sulfate chains. May be proteolytically processed to give rise to a number of active peptides.

The protein resides in the cytoplasmic vesicle. The protein localises to the secretory vesicle. It is found in the synaptic vesicle. Its subcellular location is the secreted. The protein is Neuroendocrine secretory protein 55 of Rattus norvegicus (Rat).